The primary structure comprises 419 residues: Fusaric acid cluster transcription factor FUB10 (419 aa).

The segment at residues 16 to 47 (CDRCRAQKLRCHRDSGHSTDACLRCLKSGIEC) is a DNA-binding region (zn(2)-C6 fungal-type). Residues 50 to 92 (SKARPTGRPPSRQVQPTVVVEQGDTSSSSHTTDSSPSAGGTDM) are disordered. Residues 74–86 (TSSSSHTTDSSPS) are compositionally biased toward low complexity.

Its subcellular location is the nucleus. Functionally, transcription factor that regulates the expression of the gene cluster that mediates the biosynthesis of fusaric acid, a mycotoxin with low to moderate toxicity to animals and humans, but with high phytotoxic properties. This Gibberella fujikuroi (strain CBS 195.34 / IMI 58289 / NRRL A-6831) (Bakanae and foot rot disease fungus) protein is Fusaric acid cluster transcription factor FUB10.